Reading from the N-terminus, the 657-residue chain is UvrABC system protein B (657 aa).

Residues 25-182 (KSIKQGNEFQ…KKLIEIQYER (158 aa)) form the Helicase ATP-binding domain. Position 38–45 (38–45 (GVTGSGKT)) interacts with ATP. The Beta-hairpin signature appears at 91–114 (YYDYYQPEAYVPQTDTFIEKDASI). One can recognise a Helicase C-terminal domain in the interval 429-595 (QIDDLYTEIQ…TINKEVRELI (167 aa)). Residues 621–656 (KKLIKEYTDEMKLAAKNLQFERAAQLRDKIEELKGK) enclose the UVR domain.

Belongs to the UvrB family. As to quaternary structure, forms a heterotetramer with UvrA during the search for lesions. Interacts with UvrC in an incision complex.

The protein localises to the cytoplasm. The UvrABC repair system catalyzes the recognition and processing of DNA lesions. A damage recognition complex composed of 2 UvrA and 2 UvrB subunits scans DNA for abnormalities. Upon binding of the UvrA(2)B(2) complex to a putative damaged site, the DNA wraps around one UvrB monomer. DNA wrap is dependent on ATP binding by UvrB and probably causes local melting of the DNA helix, facilitating insertion of UvrB beta-hairpin between the DNA strands. Then UvrB probes one DNA strand for the presence of a lesion. If a lesion is found the UvrA subunits dissociate and the UvrB-DNA preincision complex is formed. This complex is subsequently bound by UvrC and the second UvrB is released. If no lesion is found, the DNA wraps around the other UvrB subunit that will check the other stand for damage. The protein is UvrABC system protein B of Clostridium botulinum (strain Eklund 17B / Type B).